The following is a 189-amino-acid chain: dCTP deaminase, dUMP-forming (189 aa).

Residues 101–106 (KSSLGR), aspartate 119, 127–129 (TLE), glutamine 148, tyrosine 162, and glutamine 174 each bind dCTP. Residue glutamate 129 is the Proton donor/acceptor of the active site.

The protein belongs to the dCTP deaminase family. Homotrimer.

The enzyme catalyses dCTP + 2 H2O = dUMP + NH4(+) + diphosphate. The protein operates within pyrimidine metabolism; dUMP biosynthesis; dUMP from dCTP: step 1/1. Functionally, bifunctional enzyme that catalyzes both the deamination of dCTP to dUTP and the hydrolysis of dUTP to dUMP without releasing the toxic dUTP intermediate. The polypeptide is dCTP deaminase, dUMP-forming (Rhodococcus jostii (strain RHA1)).